Consider the following 82-residue polypeptide: uncharacterized protein (82 aa).

This is an uncharacterized protein from Orgyia pseudotsugata (Douglas-fir tussock moth).